Consider the following 324-residue polypeptide: MKNLKNKHFALLYLVLFLVLAKLSPFIITALIMGLYLSIIIDYVARFLEVFIKKPRVLPRVISNVLVFLTIAYSAVNFFPVIVREAQKVFSEIDRIRSGLENIDIPGWLSSILSSISASFSEGALSLVNKIVGYVPSFITAAILIVITAFIVSSLKRLIKENVHYLFPTNPSDGKEFLKTTYTEFERFVGGQVLVAIFVGLFVGFGAFIFKIPSAFFLGMLAFVTDFVPYLGVVISAIPLLMLAFSVHGLSGLLIGTIILVAANQLEMWVLAPKIQSNTLNVHWFIILIMILILGDLFSFGGVLIALPFLIFLKNFWKQYVMGG.

The next 8 helical transmembrane spans lie at Leu-12–Ile-32, Ile-62–Ile-82, Ile-105–Leu-125, Ile-131–Ile-151, Gly-190–Phe-210, Phe-227–Val-247, Gly-252–Ala-272, and Phe-285–Ile-305.

This sequence belongs to the autoinducer-2 exporter (AI-2E) (TC 2.A.86) family.

The protein localises to the cell membrane. This is Putative transport protein TM_1187 from Thermotoga maritima (strain ATCC 43589 / DSM 3109 / JCM 10099 / NBRC 100826 / MSB8).